The sequence spans 71 residues: uncharacterized protein (71 aa).

The chain crosses the membrane as a helical span at residues 37-57 (IGVGVSDGVSAGVGVGVAMII).

It is found in the membrane. This is an uncharacterized protein from Dictyostelium discoideum (Social amoeba).